A 475-amino-acid chain; its full sequence is Eukaryotic translation initiation factor 3 subunit L (475 aa).

In terms of domain architecture, PCI spans 257 to 451 (DAIRMFSHIL…DLDYAMQGDL (195 aa)).

Belongs to the eIF-3 subunit L family. In terms of assembly, component of the eukaryotic translation initiation factor 3 (eIF-3) complex.

It is found in the cytoplasm. Its function is as follows. Component of the eukaryotic translation initiation factor 3 (eIF-3) complex, which is involved in protein synthesis of a specialized repertoire of mRNAs and, together with other initiation factors, stimulates binding of mRNA and methionyl-tRNAi to the 40S ribosome. The eIF-3 complex specifically targets and initiates translation of a subset of mRNAs involved in cell proliferation. In Sclerotinia sclerotiorum (strain ATCC 18683 / 1980 / Ss-1) (White mold), this protein is Eukaryotic translation initiation factor 3 subunit L.